The chain runs to 340 residues: Pre-rRNA-processing protein esf-2 (340 aa).

Basic and acidic residues-rich tracts occupy residues 1-12 (MPEDDVRNKFLD) and 19-32 (DAGHGSDSEDDFQK). The tract at residues 1-103 (MPEDDVRNKF…KSVLASDLPG (103 aa)) is disordered. Residues 44-64 (DDEDSEADDFTDAEEEHDQDD) show a composition bias toward acidic residues. The span at 65-95 (AESKDAPAKDGQETTDGKEKKDGKKEKEKKS) shows a compositional bias: basic and acidic residues. Positions 124 to 214 (GVVYISRVPP…KKGSYYRDDI (91 aa)) constitute an RRM domain. Residues 272–329 (AKKASKGSKAGGEGAAQVTESTIPSAAATTTTTTNDDKRRTFKQIPLAKKRKLDETQP) are disordered.

Belongs to the ESF2/ABP1 family.

Its subcellular location is the nucleus. The protein localises to the nucleolus. Involved in the small subunit (SSU) processome assembly and function, and in the 18S rRNA synthesis. Required for the early cleavages at sites A0, A1 and A2. The protein is Pre-rRNA-processing protein esf-2 (esf-2) of Neurospora crassa (strain ATCC 24698 / 74-OR23-1A / CBS 708.71 / DSM 1257 / FGSC 987).